A 133-amino-acid chain; its full sequence is Small ribosomal subunit protein uS8 (133 aa).

Belongs to the universal ribosomal protein uS8 family. Part of the 30S ribosomal subunit. Contacts proteins S5 and S12.

Functionally, one of the primary rRNA binding proteins, it binds directly to 16S rRNA central domain where it helps coordinate assembly of the platform of the 30S subunit. The polypeptide is Small ribosomal subunit protein uS8 (Leptospira borgpetersenii serovar Hardjo-bovis (strain JB197)).